The primary structure comprises 582 residues: 2-succinyl-5-enolpyruvyl-6-hydroxy-3-cyclohexene-1-carboxylate synthase (582 aa).

This sequence belongs to the TPP enzyme family. MenD subfamily. Homodimer. It depends on Mg(2+) as a cofactor. The cofactor is Mn(2+). Requires thiamine diphosphate as cofactor.

The catalysed reaction is isochorismate + 2-oxoglutarate + H(+) = 5-enolpyruvoyl-6-hydroxy-2-succinyl-cyclohex-3-ene-1-carboxylate + CO2. It functions in the pathway quinol/quinone metabolism; 1,4-dihydroxy-2-naphthoate biosynthesis; 1,4-dihydroxy-2-naphthoate from chorismate: step 2/7. Its pathway is cofactor biosynthesis; phylloquinone biosynthesis. In terms of biological role, catalyzes the thiamine diphosphate-dependent decarboxylation of 2-oxoglutarate and the subsequent addition of the resulting succinic semialdehyde-thiamine pyrophosphate anion to isochorismate to yield 2-succinyl-5-enolpyruvyl-6-hydroxy-3-cyclohexene-1-carboxylate (SEPHCHC). The chain is 2-succinyl-5-enolpyruvyl-6-hydroxy-3-cyclohexene-1-carboxylate synthase from Prochlorococcus marinus (strain MIT 9303).